The primary structure comprises 392 residues: 1-deoxy-D-xylulose 5-phosphate reductoisomerase (392 aa).

The NADPH site is built by Thr-10, Gly-11, Ser-12, Ile-13, Asn-38, and Asn-124. Residue Lys-125 coordinates 1-deoxy-D-xylulose 5-phosphate. Glu-126 is a binding site for NADPH. Asp-150 contacts Mn(2+). 1-deoxy-D-xylulose 5-phosphate contacts are provided by Ser-151, Glu-152, Ser-176, and His-199. Glu-152 is a binding site for Mn(2+). An NADPH-binding site is contributed by Gly-205. Residues Ser-212, Asn-217, Lys-218, and Glu-221 each coordinate 1-deoxy-D-xylulose 5-phosphate. Glu-221 is a Mn(2+) binding site.

Belongs to the DXR family. Mg(2+) is required as a cofactor. It depends on Mn(2+) as a cofactor.

The enzyme catalyses 2-C-methyl-D-erythritol 4-phosphate + NADP(+) = 1-deoxy-D-xylulose 5-phosphate + NADPH + H(+). It functions in the pathway isoprenoid biosynthesis; isopentenyl diphosphate biosynthesis via DXP pathway; isopentenyl diphosphate from 1-deoxy-D-xylulose 5-phosphate: step 1/6. Functionally, catalyzes the NADPH-dependent rearrangement and reduction of 1-deoxy-D-xylulose-5-phosphate (DXP) to 2-C-methyl-D-erythritol 4-phosphate (MEP). The polypeptide is 1-deoxy-D-xylulose 5-phosphate reductoisomerase (Gloeobacter violaceus (strain ATCC 29082 / PCC 7421)).